Reading from the N-terminus, the 310-residue chain is MEIRIGSRKSSLAMWQTCYVEDKLKQSGITTSILPIDTRGDQVLNVAIAKIGSKGVFTEELEAKLADGDIDIAVHSAKDMPSVLPDGFELIAFTDREEPADVLVSHKKDLDISDSSRPVTIGTSSVRRQALLGRFYPHVRTVDIRGNVQTRVLKMKEGLCDAILMAYAGIHRMGMDDLIVHTFSPDTFIPPVGQGCIAVEASSRLAAEKKEAIRACINHPASETCLLAERAFLKRLEGGCSIPAFALARLNGDRLTLSGGLMSLDGKKFIFNTRAGAGSQATAIGTDLGNHVLENGGAALLAEIRKQQTT.

Cys-240 carries the post-translational modification S-(dipyrrolylmethanemethyl)cysteine.

It belongs to the HMBS family. In terms of assembly, monomer. Dipyrromethane is required as a cofactor.

It carries out the reaction 4 porphobilinogen + H2O = hydroxymethylbilane + 4 NH4(+). Its pathway is porphyrin-containing compound metabolism; protoporphyrin-IX biosynthesis; coproporphyrinogen-III from 5-aminolevulinate: step 2/4. Its function is as follows. Tetrapolymerization of the monopyrrole PBG into the hydroxymethylbilane pre-uroporphyrinogen in several discrete steps. The chain is Porphobilinogen deaminase from Desulfosudis oleivorans (strain DSM 6200 / JCM 39069 / Hxd3) (Desulfococcus oleovorans).